We begin with the raw amino-acid sequence, 235 residues long: Probable queuosine precursor transporter (235 aa).

6 helical membrane passes run 17-37 (IIWL…FVQI), 56-76 (FHST…DLTV), 87-107 (IIFV…VLFS), 127-147 (IAIA…IVFN), 155-175 (WWVA…FVFF), and 201-221 (FKLF…LNVI).

It belongs to the vitamin uptake transporter (VUT/ECF) (TC 2.A.88) family. Q precursor transporter subfamily.

It localises to the cell inner membrane. Functionally, involved in the import of queuosine (Q) precursors, required for Q precursor salvage. This Haemophilus influenzae (strain ATCC 51907 / DSM 11121 / KW20 / Rd) protein is Probable queuosine precursor transporter.